The following is a 293-amino-acid chain: uncharacterized protein (293 aa).

2 disordered regions span residues 121–154 (NLNFDPHQMSKPSYHHHSHSHSHHSHSHSHSQNS) and 254–274 (DILQTVPPSPTPTPPPPPQQQ). Basic residues predominate over residues 133–149 (SYHHHSHSHSHHSHSHS). Residues 260 to 272 (PPSPTPTPPPPPQ) are compositionally biased toward pro residues.

This is an uncharacterized protein from Dictyostelium discoideum (Social amoeba).